Reading from the N-terminus, the 269-residue chain is Phosphonoacetaldehyde hydrolase (269 aa).

Asp-10 functions as the Nucleophile in the catalytic mechanism. Residues Asp-10 and Ala-12 each contribute to the Mg(2+) site. Lys-52 (schiff-base intermediate with substrate) is an active-site residue. Asp-186 contributes to the Mg(2+) binding site.

The protein belongs to the HAD-like hydrolase superfamily. PhnX family. In terms of assembly, homodimer. The cofactor is Mg(2+).

It catalyses the reaction phosphonoacetaldehyde + H2O = acetaldehyde + phosphate + H(+). In terms of biological role, involved in phosphonate degradation. The polypeptide is Phosphonoacetaldehyde hydrolase (Salmonella paratyphi A (strain ATCC 9150 / SARB42)).